Reading from the N-terminus, the 432-residue chain is MQLLTIGINHHTAPVALRERVAFPLEQIKPALVTFKNVFLGPQAPNTPEAAILSTCNRTELYCATDDRAAREGAVRWLSEYHRIPVDELAPHVYALPQSEAVRHAFRVASGLDSMVLGETQILGQMKDAVRTATEAGALGTYLNQLFQRTFAVAKEVRGTTEIGTQSVSMAAAAVRLAQRIFEKVSDQRVLLIGAGEMIELCATHFAAQGPRELVVANRTAERGQRLAERFNGRAMPLADLPTRMHEFDIIVSCTASTLPIIGLGAVERAVKARRHRPIFMVDLAVPRDIEPEVGKLKDVFLYTVDDLGAIVREGNASRQAAVAQAEAIIETRVQNFMQWLDTRSVVPVIRHMHTQADALRRAEVEKAQKLLARGDDPAAVLEALSQALTNKLIHGPTSALNRVNGADRDSLIDLMRGFYQHAPRSNDQSGH.

Substrate contacts are provided by residues 55 to 58 (TCNR), Ser114, 119 to 121 (ETQ), and Gln125. The active-site Nucleophile is Cys56. Residue 194 to 199 (GAGEMI) coordinates NADP(+).

This sequence belongs to the glutamyl-tRNA reductase family. Homodimer.

It carries out the reaction (S)-4-amino-5-oxopentanoate + tRNA(Glu) + NADP(+) = L-glutamyl-tRNA(Glu) + NADPH + H(+). It participates in porphyrin-containing compound metabolism; protoporphyrin-IX biosynthesis; 5-aminolevulinate from L-glutamyl-tRNA(Glu): step 1/2. Its function is as follows. Catalyzes the NADPH-dependent reduction of glutamyl-tRNA(Glu) to glutamate 1-semialdehyde (GSA). The polypeptide is Glutamyl-tRNA reductase (Burkholderia orbicola (strain AU 1054)).